A 1063-amino-acid chain; its full sequence is Endo-1,4-beta-xylanase 2 (1063 aa).

CBM-cenC domains follow at residues asparagine 5–proline 146, asparagine 183–proline 313, asparagine 348–proline 482, and asparagine 517–serine 662. Residues serine 711 to isoleucine 1006 form the GH10 domain. Glutamate 840 functions as the Proton donor in the catalytic mechanism. The active-site Nucleophile is the glutamate 941.

It belongs to the glycosyl hydrolase 10 (cellulase F) family.

The enzyme catalyses Endohydrolysis of (1-&gt;4)-beta-D-xylosidic linkages in xylans.. It functions in the pathway glycan degradation; xylan degradation. Binds to and hydrolyzes insoluble and soluble xylan substrates. The polypeptide is Endo-1,4-beta-xylanase 2 (Arabidopsis thaliana (Mouse-ear cress)).